Consider the following 234-residue polypeptide: uncharacterized protein (234 aa).

Residues 1 to 12 show a composition bias toward low complexity; it reads MGSSSSSSLNNS. The tract at residues 1-184 is disordered; the sequence is MGSSSSSSLN…TPYLSGANSR (184 aa). Polar residues-rich tracts occupy residues 21–40 and 52–64; these read TPESQMTVNDNKNDNVSILS and KSTSIPANNNLTP. The segment covering 66 to 77 has biased composition (low complexity); it reads KSRWSFSSSKKS. Positions 105–120 are enriched in polar residues; sequence GDFTPSLGNTPKSSFS. Over residues 152-167 the composition is skewed to basic and acidic residues; it reads LGELFRDSIREEREES.

In terms of assembly, interacts with RLK902. Expressed in stems, rosette leaves and roots and weakly in inflorescences.

This is an uncharacterized protein from Arabidopsis thaliana (Mouse-ear cress).